Here is a 389-residue protein sequence, read N- to C-terminus: Alanine racemase (389 aa).

Lys48 serves as the catalytic Proton acceptor; specific for D-alanine. Lys48 is modified (N6-(pyridoxal phosphate)lysine). Arg144 contacts substrate. Tyr281 (proton acceptor; specific for L-alanine) is an active-site residue. Met329 is a substrate binding site.

Belongs to the alanine racemase family. It depends on pyridoxal 5'-phosphate as a cofactor.

It catalyses the reaction L-alanine = D-alanine. The protein operates within amino-acid biosynthesis; D-alanine biosynthesis; D-alanine from L-alanine: step 1/1. Functionally, catalyzes the interconversion of L-alanine and D-alanine. May also act on other amino acids. This chain is Alanine racemase (alr), found in Leptospira interrogans serogroup Icterohaemorrhagiae serovar copenhageni (strain Fiocruz L1-130).